Reading from the N-terminus, the 182-residue chain is D-lyxose ketol-isomerase (182 aa).

H74, H76, E87, and H142 together coordinate Mn(2+).

This sequence belongs to the D-lyxose ketol-isomerase family. As to quaternary structure, homodimer. Mn(2+) serves as cofactor.

The catalysed reaction is D-lyxose = D-xylulose. Sugar isomerase that catalyzes the reversible isomerization of D-lyxose to D-xylulose. Shows weak activity with D-mannose and L-ribose. The polypeptide is D-lyxose ketol-isomerase (Cohnella laeviribosi).